The following is a 472-amino-acid chain: Ribulose bisphosphate carboxylase large chain (472 aa).

Substrate-binding residues include N116 and T166. Catalysis depends on K168, which acts as the Proton acceptor. K170 serves as a coordination point for substrate. Mg(2+) is bound by residues K194, D196, and E197. K194 is subject to N6-carboxylysine. H287 functions as the Proton acceptor in the catalytic mechanism. Positions 288, 320, and 372 each coordinate substrate.

It belongs to the RuBisCO large chain family. Type I subfamily. Heterohexadecamer of 8 large chains and 8 small chains. It depends on Mg(2+) as a cofactor.

It carries out the reaction 2 (2R)-3-phosphoglycerate + 2 H(+) = D-ribulose 1,5-bisphosphate + CO2 + H2O. It catalyses the reaction D-ribulose 1,5-bisphosphate + O2 = 2-phosphoglycolate + (2R)-3-phosphoglycerate + 2 H(+). Functionally, ruBisCO catalyzes two reactions: the carboxylation of D-ribulose 1,5-bisphosphate, the primary event in carbon dioxide fixation, as well as the oxidative fragmentation of the pentose substrate. Both reactions occur simultaneously and in competition at the same active site. This is Ribulose bisphosphate carboxylase large chain from Nitrobacter vulgaris.